The chain runs to 253 residues: 5'/3'-nucleotidase SurE (253 aa).

The a divalent metal cation site is built by aspartate 8, aspartate 9, serine 39, and asparagine 92.

This sequence belongs to the SurE nucleotidase family. A divalent metal cation is required as a cofactor.

It localises to the cytoplasm. It carries out the reaction a ribonucleoside 5'-phosphate + H2O = a ribonucleoside + phosphate. It catalyses the reaction a ribonucleoside 3'-phosphate + H2O = a ribonucleoside + phosphate. The enzyme catalyses [phosphate](n) + H2O = [phosphate](n-1) + phosphate + H(+). Functionally, nucleotidase with a broad substrate specificity as it can dephosphorylate various ribo- and deoxyribonucleoside 5'-monophosphates and ribonucleoside 3'-monophosphates with highest affinity to 3'-AMP. Also hydrolyzes polyphosphate (exopolyphosphatase activity) with the preference for short-chain-length substrates (P20-25). Might be involved in the regulation of dNTP and NTP pools, and in the turnover of 3'-mononucleotides produced by numerous intracellular RNases (T1, T2, and F) during the degradation of various RNAs. This Citrobacter koseri (strain ATCC BAA-895 / CDC 4225-83 / SGSC4696) protein is 5'/3'-nucleotidase SurE.